The following is a 398-amino-acid chain: Trans-2-enoyl-CoA reductase [NADH] (398 aa).

Residues 47–52, 74–75, 111–112, and 139–140 contribute to the NAD(+) site; these read GASSGF, FE, DA, and LA. Tyr225 is a substrate binding site. The active-site Proton donor is the Tyr235. NAD(+) contacts are provided by residues Lys244 and 274–276; that span reads IVT.

It belongs to the TER reductase family. In terms of assembly, monomer.

The catalysed reaction is a 2,3-saturated acyl-CoA + NAD(+) = a (2E)-enoyl-CoA + NADH + H(+). It participates in lipid metabolism; fatty acid biosynthesis. In terms of biological role, involved in the fatty acid synthesis (FAS II). Catalyzes the reduction of a carbon-carbon double bond in an enoyl moiety that is covalently linked to a coenzyme A (CoA). This Clostridium beijerinckii (strain ATCC 51743 / NCIMB 8052) (Clostridium acetobutylicum) protein is Trans-2-enoyl-CoA reductase [NADH].